Consider the following 631-residue polypeptide: Phosphomethylpyrimidine synthase (631 aa).

Substrate contacts are provided by residues Asn239, Met268, Tyr297, His333, 353–355 (SRG), 394–397 (DGLR), and Glu433. His437 provides a ligand contact to Zn(2+). Tyr460 contributes to the substrate binding site. His501 provides a ligand contact to Zn(2+). [4Fe-4S] cluster is bound by residues Cys581, Cys584, and Cys589.

Belongs to the ThiC family. In terms of assembly, homodimer. [4Fe-4S] cluster serves as cofactor.

It carries out the reaction 5-amino-1-(5-phospho-beta-D-ribosyl)imidazole + S-adenosyl-L-methionine = 4-amino-2-methyl-5-(phosphooxymethyl)pyrimidine + CO + 5'-deoxyadenosine + formate + L-methionine + 3 H(+). Its pathway is cofactor biosynthesis; thiamine diphosphate biosynthesis. In terms of biological role, catalyzes the synthesis of the hydroxymethylpyrimidine phosphate (HMP-P) moiety of thiamine from aminoimidazole ribotide (AIR) in a radical S-adenosyl-L-methionine (SAM)-dependent reaction. In Salmonella paratyphi A (strain AKU_12601), this protein is Phosphomethylpyrimidine synthase.